Reading from the N-terminus, the 581-residue chain is Putative adenine deaminase BH0637 (581 aa).

Belongs to the metallo-dependent hydrolases superfamily. Adenine deaminase family.

The enzyme catalyses adenine + H2O + H(+) = hypoxanthine + NH4(+). This is Putative adenine deaminase BH0637 from Halalkalibacterium halodurans (strain ATCC BAA-125 / DSM 18197 / FERM 7344 / JCM 9153 / C-125) (Bacillus halodurans).